A 450-amino-acid polypeptide reads, in one-letter code: Glycerol dehydrogenase 1 (450 aa).

NAD(+) contacts are provided by residues aspartate 99, 155–159 (GKTMD), and 177–180 (TTAS). Aspartate 182 is a binding site for substrate. Residues serine 186, leucine 188, and tyrosine 192 each coordinate NAD(+). Substrate-binding residues include aspartate 232, histidine 315, and histidine 333. Zn(2+) contacts are provided by aspartate 232, histidine 315, and histidine 333.

The protein belongs to the iron-containing alcohol dehydrogenase family. The cofactor is Zn(2+).

Its subcellular location is the mitochondrion. It catalyses the reaction glycerol + NAD(+) = dihydroxyacetone + NADH + H(+). The protein operates within polyol metabolism; glycerol fermentation; glycerone phosphate from glycerol (oxidative route): step 1/2. Functionally, glycerol dehydrogenase involved in the assimilation of glycerol. The polypeptide is Glycerol dehydrogenase 1 (gld1) (Schizosaccharomyces pombe (strain 972 / ATCC 24843) (Fission yeast)).